The chain runs to 743 residues: F-box protein COS111 (743 aa).

One can recognise an F-box domain in the interval 145-191 (ELHIKNLPVEILDYIFYLVDDNLDYKSCMYTCKLFYFLAKPYYYENL). 2 disordered regions span residues 224–257 (IKPG…DPQY) and 311–330 (FSNV…SSST). Residues 229-248 (DEDEQEEGQEENAENGEEEN) show a composition bias toward acidic residues.

F-box protein probably involved in ubiquitin conjugation pathway. The protein is F-box protein COS111 (COS111) of Candida albicans (strain SC5314 / ATCC MYA-2876) (Yeast).